The following is a 395-amino-acid chain: Thyroid hormone receptor beta (395 aa).

Residues 1 to 31 (MSEPAENCSPRWKDEAIQNGYIPSYLDKDEL) form a modulating region. Zn(2+)-binding residues include cysteine 32, cysteine 35, cysteine 49, cysteine 52, cysteine 70, cysteine 76, cysteine 86, and cysteine 89. 2 NR C4-type zinc fingers span residues 32-52 (CVVCGDKATGYHYRCITCEGC) and 70-94 (CKYEGKCVIDKVTRNQCQECRFKKC). Positions 32–99 (CVVCGDKATG…RFKKCIAVGM (68 aa)) form a DNA-binding region, nuclear receptor. The NR LBD domain occupies 142 to 395 (EEWDLIRMVT…PPLFLEVFED (254 aa)). Residues arginine 216, asparagine 265, and histidine 369 each contribute to the 3,3',5-triiodo-L-thyronine site. Positions 216, 265, and 369 each coordinate L-thyroxine.

It belongs to the nuclear hormone receptor family. NR1 subfamily.

It is found in the nucleus. In terms of biological role, nuclear hormone receptor that can act as a repressor or activator of transcription. High affinity receptor for thyroid hormones, including triiodothyronine and thyroxine. The chain is Thyroid hormone receptor beta (thrb) from Paralichthys olivaceus (Bastard halibut).